Here is a 662-residue protein sequence, read N- to C-terminus: MKPLEKFLKKQTSQLAGRTVAGGPGGGLGSCGGPGGGGGPGGGGGPAGGQRSLQRRQSVSRLLLPAFLREPPAEPGLEPPVPEEGGEPAGVAEEPGSGGPCWLQLEEVPGPGPLGGGGPLRSPSSYSSDELSPGEPLTSPPWAPLGAPERPEHLLNRVLERLAGGATRDSAASDILLDDIVLTHSLFLPTEKFLQELHQYFVRAGGMEGPEGLGRKQACLAMLLHFLDTYQGLLQEEEGAGHIIKDLYLLIMKDESLYQGLREDTLRLHQLVETVELKIPEENQPPSKQVKPLFRHFRRIDSCLQTRVAFRGSDEIFCRVYMPDHSYVTIRSRLSASVQDILGSVTEKLQYSEEPAGREDSLILVAVSSSGEKVLLQPTEDCVFTALGINSHLFACTRDSYEALVPLPEEIQVSPGDTEIHRVEPEDVANHLTAFHWELFRCVHELEFVDYVFHGERGRRETANLELLLQRCSEVTHWVATEVLLCEAPGKRAQLLKKFIKIAALCKQNQDLLSFYAVVMGLDNAAVSRLRLTWEKLPGKFKNLFRKFENLTDPCRNHKSYREVISKMKPPVIPFVPLILKDLTFLHEGSKTLVDGLVNIEKLHSVAEKVRTIRKYRSRPLCLDMEASPNHLQTKAYVRQFQVIDNQNLLFELSYKLEANSQ.

Residues 1-149 form a disordered region; sequence MKPLEKFLKK…PPWAPLGAPE (149 aa). The segment covering 20–48 has biased composition (gly residues); sequence VAGGPGGGLGSCGGPGGGGGPGGGGGPAG. Over residues 49–64 the composition is skewed to low complexity; sequence GQRSLQRRQSVSRLLL. The span at 73 to 82 shows a compositional bias: pro residues; that stretch reads AEPGLEPPVP. The span at 120 to 135 shows a compositional bias: low complexity; sequence LRSPSSYSSDELSPGE. In terms of domain architecture, Ras-GEF spans 424–660; the sequence is EPEDVANHLT…FELSYKLEAN (237 aa).

Functionally, probable guanine nucleotide exchange factor (GEF). The sequence is that of Rap guanine nucleotide exchange factor-like 1 (RAPGEFL1) from Homo sapiens (Human).